The sequence spans 1007 residues: uncharacterized protein (1007 aa).

An N-terminal signal peptide occupies residues 1–51 (MTTPISNSPSSIPTVTVSTTTASSGSLGTSTVSSTTTSTSVAQTATTTSSA). Residues 1–96 (MTTPISNSPS…SATANKTSSA (96 aa)) show a composition bias toward low complexity. Disordered stretches follow at residues 1 to 186 (MTTP…GNPI), 200 to 224 (TYTT…MSLP), 387 to 533 (NWGS…GPDI), 543 to 562 (TVYP…ANQN), 578 to 645 (ETII…GPDI), 655 to 674 (TVYP…ANQN), and 712 to 757 (DLED…GPDI). Residues 118–163 (DGEVSSNYDDVDTPTNSSDSTVDSDYQDVETQYKTISNNGENTYET) are compositionally biased toward polar residues. Basic and acidic residues predominate over residues 167-176 (HGEKNTHVQE). Composition is skewed to polar residues over residues 177–186 (SHASGTGNPI) and 200–210 (TYTTSPRNENI). Residues 423-442 (VINVNVNVGGTNVNIGDTNV) show a composition bias toward low complexity. Polar residues predominate over residues 443-453 (SKGSGTPTSSQ). Over residues 469–491 (IDTNNQTNGDINTNDNSNNVDGS) the composition is skewed to low complexity. Residues 507–523 (DTESTNGNDSGKTTSTE) are compositionally biased toward polar residues. Positions 597–618 (ADADVEDTSDTDSGIGDDDGVS) are enriched in acidic residues. Positions 619–635 (DTESTNGNNSGKTTSTE) are enriched in low complexity. Over residues 712–730 (DLEDVSDADSGFGDDDGIS) the composition is skewed to acidic residues. Over residues 732–743 (TESTNGNDSGKN) the composition is skewed to polar residues.

The protein belongs to the chlamydial CPn_0572/CT_456/TC_0741 family.

This is an uncharacterized protein from Chlamydia muridarum (strain MoPn / Nigg).